The chain runs to 336 residues: Mitochondrial thiamine diphosphate carrier 1 (336 aa).

6 helical membrane passes run 11-27, 88-105, 127-150, 182-199, 230-246, and 303-322; these read RRAL…GGIS, VPAL…FTVL, YLSY…FDLL, LYSG…YAGL, SVSS…AGTF, and GLFP…FVVY. Solcar repeat units lie at residues 11–111, 124–210, and 231–328; these read RRAL…LKTF, LSPY…FKRS, and VSSF…ISDW.

This sequence belongs to the mitochondrial carrier (TC 2.A.29) family. Ubiquitous with highest expression in pollen.

The protein resides in the mitochondrion inner membrane. Mitochondrial transporter that mediates uptake of thiamine diphosphate (ThDP) into mitochondria. In Zea mays (Maize), this protein is Mitochondrial thiamine diphosphate carrier 1.